Reading from the N-terminus, the 572-residue chain is Glutamate--tRNA ligase (572 aa).

Residues 107-117 (PNPDGAFHLGN) carry the 'HIGH' region motif.

The protein belongs to the class-I aminoacyl-tRNA synthetase family. Glutamate--tRNA ligase type 2 subfamily.

It localises to the cytoplasm. It catalyses the reaction tRNA(Glu) + L-glutamate + ATP = L-glutamyl-tRNA(Glu) + AMP + diphosphate. Its function is as follows. Catalyzes the attachment of glutamate to tRNA(Glu) in a two-step reaction: glutamate is first activated by ATP to form Glu-AMP and then transferred to the acceptor end of tRNA(Glu). The protein is Glutamate--tRNA ligase of Pyrococcus furiosus (strain ATCC 43587 / DSM 3638 / JCM 8422 / Vc1).